The sequence spans 292 residues: Protein/nucleic acid deglycase HchA (292 aa).

The span at 1–12 (MSQDVNELSKQP) shows a compositional bias: polar residues. The disordered stretch occupies residues 1 to 23 (MSQDVNELSKQPTPDKAEDNAFF). Catalysis depends on cysteine 190, which acts as the Nucleophile.

This sequence belongs to the peptidase C56 family. HchA subfamily.

It is found in the cytoplasm. The enzyme catalyses N(omega)-(1-hydroxy-2-oxopropyl)-L-arginyl-[protein] + H2O = lactate + L-arginyl-[protein] + H(+). The catalysed reaction is N(6)-(1-hydroxy-2-oxopropyl)-L-lysyl-[protein] + H2O = lactate + L-lysyl-[protein] + H(+). It catalyses the reaction S-(1-hydroxy-2-oxopropyl)-L-cysteinyl-[protein] + H2O = lactate + L-cysteinyl-[protein] + H(+). It carries out the reaction N(omega)-(1-hydroxy-2-oxoethyl)-L-arginyl-[protein] + H2O = L-arginyl-[protein] + glycolate + H(+). The enzyme catalyses N(6)-(1-hydroxy-2-oxoethyl)-L-lysyl-[protein] + H2O = glycolate + L-lysyl-[protein] + H(+). The catalysed reaction is S-(1-hydroxy-2-oxoethyl)-L-cysteinyl-[protein] + H2O = glycolate + L-cysteinyl-[protein] + H(+). It catalyses the reaction N(2)-(1-hydroxy-2-oxopropyl)-dGTP + H2O = lactate + dGTP + H(+). It carries out the reaction N(2)-(1-hydroxy-2-oxopropyl)-GTP + H2O = lactate + GTP + H(+). The enzyme catalyses N(2)-(1-hydroxy-2-oxopropyl)-GDP + H2O = lactate + GDP + H(+). The catalysed reaction is N(2)-(1-hydroxy-2-oxopropyl)-GMP + H2O = lactate + GMP + H(+). It catalyses the reaction N(2)-(1-hydroxy-2-oxoethyl)-dGTP + H2O = dGTP + glycolate + H(+). It carries out the reaction N(2)-(1-hydroxy-2-oxoethyl)-GTP + H2O = glycolate + GTP + H(+). The enzyme catalyses N(2)-(1-hydroxy-2-oxoethyl)-GDP + H2O = glycolate + GDP + H(+). The catalysed reaction is N(2)-(1-hydroxy-2-oxoethyl)-GMP + H2O = glycolate + GMP + H(+). It catalyses the reaction an N(2)-(1-hydroxy-2-oxopropyl)-guanosine in RNA + H2O = a guanosine in RNA + lactate + H(+). It carries out the reaction an N(2)-(1-hydroxy-2-oxopropyl)-2'-deoxyguanosine in DNA + H2O = a 2'-deoxyguanosine in DNA + lactate + H(+). The enzyme catalyses an N(2)-(1-hydroxy-2-oxoethyl)-guanosine in RNA + H2O = a guanosine in RNA + glycolate + H(+). The catalysed reaction is an N(2)-(1-hydroxy-2-oxoethyl)-2'-deoxyguanosine in DNA + H2O = a 2'-deoxyguanosine in DNA + glycolate + H(+). In terms of biological role, protein and nucleotide deglycase that catalyzes the deglycation of the Maillard adducts formed between amino groups of proteins or nucleotides and reactive carbonyl groups of glyoxals. Thus, functions as a protein deglycase that repairs methylglyoxal- and glyoxal-glycated proteins, and releases repaired proteins and lactate or glycolate, respectively. Deglycates cysteine, arginine and lysine residues in proteins, and thus reactivates these proteins by reversing glycation by glyoxals. Acts on early glycation intermediates (hemithioacetals and aminocarbinols), preventing the formation of Schiff bases and advanced glycation endproducts (AGE). Also functions as a nucleotide deglycase able to repair glycated guanine in the free nucleotide pool (GTP, GDP, GMP, dGTP) and in DNA and RNA. Is thus involved in a major nucleotide repair system named guanine glycation repair (GG repair), dedicated to reversing methylglyoxal and glyoxal damage via nucleotide sanitization and direct nucleic acid repair. Plays an important role in protecting cells from carbonyl stress. The polypeptide is Protein/nucleic acid deglycase HchA (Staphylococcus aureus (strain Mu3 / ATCC 700698)).